Reading from the N-terminus, the 125-residue chain is Holo-[acyl-carrier-protein] synthase (125 aa).

Residues D8 and E57 each coordinate Mg(2+).

Belongs to the P-Pant transferase superfamily. AcpS family. Mg(2+) is required as a cofactor.

The protein resides in the cytoplasm. The enzyme catalyses apo-[ACP] + CoA = holo-[ACP] + adenosine 3',5'-bisphosphate + H(+). Its function is as follows. Transfers the 4'-phosphopantetheine moiety from coenzyme A to a Ser of acyl-carrier-protein. This chain is Holo-[acyl-carrier-protein] synthase, found in Nitrosomonas eutropha (strain DSM 101675 / C91 / Nm57).